Consider the following 59-residue polypeptide: Cecropin-A (59 aa).

Residues 1–23 form the signal peptide; the sequence is MNFTKLFLLIAMAVLLLTGQSEA. A propeptide spans 58–59 (removed in mature form (AeaeCec2)); that stretch reads GK.

As to expression, hemolymph (at protein level).

It is found in the secreted. Its function is as follows. Antimicrobial peptide. Antibacterial activity against Gram-negative bacteria E.coli D22 and D31, E.carotovora, K.pneumoniae, P.aeruginosa, S.typhimurium, E.cloacae B12 and X.campestris and Gram-positive bacteria A.viridans, M.luteus, B.megaterium and S.pyogenes. Possesses antifungal activity against F.oxysporum, F.culmorum and N.crassa, C.albicans, C.neoformans and S.cerevisiae. No activity against Gram-negative S.marcescens Db11, Gram-positive B.cereus, B.subtilis, B.thuringiensis, S.aureus and L.monocytogenes, the fungi A.fumigatus and B.bassiana and C.glabrata. Partially neutralizes lipopolysaccharides (LPS). Exhibits anti-inflammatory properties: inhibits LPS-induced iNOS/NOS2 transcription, nitric oxide (NO) and pro-inflammatory cytokine production in mouse macrophages and human peripheral blood mononuclear cells (PBMCs); inhibits LPS-induced activation of MAPK and NF-kappa-B signaling pathways in mouse macrophages. This chain is Cecropin-A (CECA), found in Aedes aegypti (Yellowfever mosquito).